Consider the following 152-residue polypeptide: MTQLCPCGSALEYSLCCQRYLSGDQLAPDPSHLMRSRYTAFVIKDADYLIKTWHPSCQAADFRQEIVSGFTNTQWQGLTIYETSIGQTAKEGFVSFVARFIEHDKPGAIIERSRFILEGGQWYYIDGTRPQFSRNDACPCGSGKKFKKCCGQ.

It belongs to the UPF0225 family.

The protein is UPF0225 protein Ent638_2310 of Enterobacter sp. (strain 638).